The chain runs to 326 residues: MTEIANGQQILPPDYTLKEPEPEHCPGPESENAGKGDSCQGCANKEVCESLPKGPDPDLPLIKENLANIKHKILILSGKGGVGKSTFTTMLSWALSADEDLQVGAMDLDICGPSLPHMLGCVRETIHESNTGWTPVYVTDNLATMSIQYMLPDTDSAIIWRGSKKNALIKKFLKDVDWDYLDYLLIDTPPGTSDEHISINNYLKESQIDGALIVTTPQEVALLDVRKEINFCRKAGINILGLVENMSGFVCPNCKGESKIFKATTGGGKALCNELGIDFLGSVPLDPRIGRCCETGESFLDEFPDSPASTAILEVIESLRDAVGDV.

Residues M1 to S38 are disordered. The span at T16–P26 shows a compositional bias: basic and acidic residues. [4Fe-4S] cluster is bound by residues C25, C39, C42, and C48. G78–S85 contacts ATP. [4Fe-4S] cluster-binding residues include C251 and C254.

The protein belongs to the Mrp/NBP35 ATP-binding proteins family. NUBP1/NBP35 subfamily. As to quaternary structure, heterotetramer of 2 NBP35 and 2 CFD1 chains. The cofactor is [4Fe-4S] cluster.

The protein localises to the cytoplasm. It localises to the nucleus. Component of the cytosolic iron-sulfur (Fe/S) protein assembly (CIA) machinery. Required for maturation of extramitochondrial Fe-S proteins. The NBP35-CFD1 heterotetramer forms a Fe-S scaffold complex, mediating the de novo assembly of an Fe-S cluster and its transfer to target apoproteins. Required for biogenesis and export of both ribosomal subunits, which may reflect a role in assembly of the Fe/S clusters in RLI1, a protein which performs rRNA processing and ribosome export. This Kluyveromyces lactis (strain ATCC 8585 / CBS 2359 / DSM 70799 / NBRC 1267 / NRRL Y-1140 / WM37) (Yeast) protein is Cytosolic Fe-S cluster assembly factor NBP35.